The sequence spans 99 residues: Transmembrane protein 14A (99 aa).

Helical transmembrane passes span 1–21, 24–44, and 79–99; these read MDLI…LGYK, GGVP…YGAY, and PAGL…LLLL.

Belongs to the TMEM14 family.

The protein resides in the mitochondrion membrane. Its subcellular location is the endoplasmic reticulum membrane. Inhibits apoptosis via negative regulation of the mitochondrial outer membrane permeabilization involved in apoptotic signaling pathway. The protein is Transmembrane protein 14A (Tmem14a) of Mus musculus (Mouse).